The sequence spans 631 residues: Shootin-1 (631 aa).

M1 is subject to N-acetylmethionine. S3 and S4 each carry phosphoserine. Residues 7 to 353 (EKQLQLITSL…RVNQSENSVP (347 aa)) are a coiled coil. S101 bears the Phosphoserine; by PAK1 mark. A Phosphoserine modification is found at S249. A disordered region spans residues 343-511 (KRVNQSENSV…SESKSMPVLG (169 aa)). Over residues 352 to 369 (VPPPPPPPPPLPPPPPNP) the composition is skewed to pro residues. A Phosphoserine modification is found at S375. The segment covering 403–418 (TDLKRQAVEEMMDRIK) has biased composition (basic and acidic residues). Residues 456-465 (LNKSTSSRSL) show a composition bias toward polar residues. The residue at position 473 (S473) is a Phosphoserine. T487 bears the Phosphothreonine mark. Polar residues predominate over residues 490 to 505 (ADSSSPTGILATSESK). S494 is modified (phosphoserine). Residue T496 is modified to Phosphothreonine. A phosphoserine mark is found at S506, S515, S532, and S534. Disordered regions lie at residues 524 to 566 (KTLE…IGCR) and 579 to 631 (VVVL…SSNC). The residue at position 537 (T537) is a Phosphothreonine. Positions 550-561 (CTSSKVTFQPPS) are enriched in polar residues. The span at 590-631 (PQTKDQVAEKDPTQHKEDEGEIQPENKEDSIENVRETDSSNC) shows a compositional bias: basic and acidic residues.

Belongs to the shootin family. In terms of assembly, interacts with L1CAM; this interaction occurs in axonal growth cones. Interacts with actin filament retrograde flow; this interaction is enhanced in a netrin-1- and PAK1-dependent manner and promotes F-actin-substrate coupling and concomitant formation of traction forces at axonal growth cones. Interacts with RUFY3. Interacts with PFN2. Interacts (via N-terminus) with KIF20B; this interaction is direct and promotes the association of SHTN1 to microtubules in primary neurons. Associates with microtubule. In terms of processing, phosphorylated on Ser-101 and Ser-249 by PAK1 through a CDC42- and RAC1-dependent signaling pathway, which enhances its association with F-actin retrograde flow in filopodia and lamellipodia of axonal growth cones. Phosphorylation on Ser-101 and Ser-249 is increased by netrin-1.

The protein localises to the perikaryon. Its subcellular location is the cell projection. It is found in the axon. It localises to the growth cone. The protein resides in the cytoplasm. The protein localises to the cytoskeleton. Its subcellular location is the filopodium. It is found in the lamellipodium. In terms of biological role, involved in the generation of internal asymmetric signals required for neuronal polarization and neurite outgrowth. Mediates netrin-1-induced F-actin-substrate coupling or 'clutch engagement' within the axon growth cone through activation of CDC42, RAC1 and PAK1-dependent signaling pathway, thereby converting the F-actin retrograde flow into traction forces, concomitantly with filopodium extension and axon outgrowth. Plays a role in cytoskeletal organization by regulating the subcellular localization of phosphoinositide 3-kinase (PI3K) activity at the axonal growth cone. Also plays a role in regenerative neurite outgrowth. In the developing cortex, cooperates with KIF20B to promote both the transition from the multipolar to the bipolar stage and the radial migration of cortical neurons from the ventricular zone toward the superficial layer of the neocortex. Involved in the accumulation of phosphatidylinositol 3,4,5-trisphosphate (PIP3) in the growth cone of primary hippocampal neurons. This Homo sapiens (Human) protein is Shootin-1.